Reading from the N-terminus, the 105-residue chain is Urease subunit beta (105 aa).

The protein belongs to the urease beta subunit family. As to quaternary structure, heterotrimer of UreA (gamma), UreB (beta) and UreC (alpha) subunits. Three heterotrimers associate to form the active enzyme.

It is found in the cytoplasm. The catalysed reaction is urea + 2 H2O + H(+) = hydrogencarbonate + 2 NH4(+). It functions in the pathway nitrogen metabolism; urea degradation; CO(2) and NH(3) from urea (urease route): step 1/1. The protein is Urease subunit beta of Pseudomonas putida (strain GB-1).